The primary structure comprises 393 residues: Cytochrome b (393 aa).

Residues 1 to 33 (MTIRNQRFSLLKQPISSTLNQHLVDYPTPSNLS) lie on the Mitochondrial matrix side of the membrane. The chain crosses the membrane as a helical span at residues 34 to 57 (YWWGFGSLAGICLVIQIVTGVFLA). The Mitochondrial intermembrane portion of the chain corresponds to 58-80 (MHYTPHVDLAFNSVEHIMRDVEG). Residues 81 to 108 (GWLLRYMHANGASMFFIVVYLHIFRGLY) form a helical membrane-spanning segment. Heme b-binding residues include His88 and His102. Over 109-116 (YASYSSPR) the chain is Mitochondrial matrix. The helical transmembrane segment at 117 to 141 (EFVWCLGVVIFLLMIVTAFIGYVLP) threads the bilayer. Residues 142–178 (WGQMSFWGATVITSLASAIPVVGDTIVTWLWGGFSVD) are Mitochondrial intermembrane-facing. The chain crosses the membrane as a helical span at residues 179 to 210 (NATLNRFFSLHYLLPFILVGASLLHLAALHQY). Residues His189 and His203 each coordinate heme b. Position 208 (His208) interacts with a ubiquinone. At 211 to 229 (GSNNPLGVHSEMDKIAFYP) the chain is on the mitochondrial matrix side. The helical transmembrane segment at 230-252 (YFYVKDLVGWVAFAIFFSIWIFY) threads the bilayer. Topologically, residues 253-293 (APNVLGHPDNYIPANPMSTPPHIVPEWYFLPIYAILRSIPD) are mitochondrial intermembrane. Residues 294–314 (KAGGVAAIALVFICLLALPFF) traverse the membrane as a helical segment. Residues 315–325 (KSMYVRSSSFR) are Mitochondrial matrix-facing. The helical transmembrane segment at 326 to 346 (PIYQGMFWLLLADCLLLGWIG) threads the bilayer. Residues 347–353 (CQPVEAP) are Mitochondrial intermembrane-facing. A helical transmembrane segment spans residues 354-370 (FVTIGQISSLVFFLFFA). Topologically, residues 371-393 (ITPILGRVGRGIPNSYTDETDHT) are mitochondrial matrix.

The protein belongs to the cytochrome b family. As to quaternary structure, component of the ubiquinol-cytochrome c oxidoreductase (cytochrome b-c1 complex, complex III, CIII), a multisubunit enzyme composed of 10 subunits. The complex is composed of 3 respiratory subunits cytochrome b (MT-CYB), cytochrome c1 (CYC1-1 or CYC1-2) and Rieske protein (UCR1-1 or UCR1-2), 2 core protein subunits MPPalpha1 (or MPPalpha2) and MPPB, and 5 low-molecular weight protein subunits QCR7-1 (or QCR7-2), UCRQ-1 (or UCRQ-2), QCR9, UCRY and probably QCR6-1 (or QCR6-2). The complex exists as an obligatory dimer and forms supercomplexes (SCs) in the inner mitochondrial membrane with NADH-ubiquinone oxidoreductase (complex I, CI), resulting in different assemblies (supercomplexes SCI(1)III(2) and SCI(2)III(4)). It depends on heme b as a cofactor.

Its subcellular location is the mitochondrion inner membrane. Functionally, component of the ubiquinol-cytochrome c oxidoreductase, a multisubunit transmembrane complex that is part of the mitochondrial electron transport chain which drives oxidative phosphorylation. The respiratory chain contains 3 multisubunit complexes succinate dehydrogenase (complex II, CII), ubiquinol-cytochrome c oxidoreductase (cytochrome b-c1 complex, complex III, CIII) and cytochrome c oxidase (complex IV, CIV), that cooperate to transfer electrons derived from NADH and succinate to molecular oxygen, creating an electrochemical gradient over the inner membrane that drives transmembrane transport and the ATP synthase. The cytochrome b-c1 complex catalyzes electron transfer from ubiquinol to cytochrome c, linking this redox reaction to translocation of protons across the mitochondrial inner membrane, with protons being carried across the membrane as hydrogens on the quinol. In the process called Q cycle, 2 protons are consumed from the matrix, 4 protons are released into the intermembrane space and 2 electrons are passed to cytochrome c. Cytochrome b is a catalytic core subunit containing 2 b-type hemes BL and BH topographically segregated in the quinone reduction (Qi) and quinol oxidation (Q0) sites on opposite sides of the membrane. This Arabidopsis thaliana (Mouse-ear cress) protein is Cytochrome b (MT-CYB).